Reading from the N-terminus, the 199-residue chain is Ribonuclease HII (199 aa).

The 190-residue stretch at 10–199 folds into the RNase H type-2 domain; that stretch reads HLVAGVDEVG…VKRALGLASN (190 aa). A divalent metal cation contacts are provided by D16, E17, and D108.

Belongs to the RNase HII family. The cofactor is Mn(2+). Mg(2+) serves as cofactor.

It is found in the cytoplasm. The catalysed reaction is Endonucleolytic cleavage to 5'-phosphomonoester.. Endonuclease that specifically degrades the RNA of RNA-DNA hybrids. In Klebsiella pneumoniae subsp. pneumoniae (strain ATCC 700721 / MGH 78578), this protein is Ribonuclease HII.